Reading from the N-terminus, the 199-residue chain is MYVGRIVAVGCSGDAVWVGYRVSSRSFPNRRATASGSSVFVHPVDPSDVLKNPYITYPCIRASNDFAVVSNGDHTDMIFDRIEDGSGPLDAVALSLVAYGYERDDLRTPRIAGVVSGRSAVLGIAAHDEIRVRKIELQDGDAWMVATYEKTGFEPVSMEGASASSIARSLFGLPFERPVCSAAAFRRDDGFELAVYNPR.

The protein belongs to the archaeal IMP cyclohydrolase family.

The enzyme catalyses IMP + H2O = 5-formamido-1-(5-phospho-D-ribosyl)imidazole-4-carboxamide. It functions in the pathway purine metabolism; IMP biosynthesis via de novo pathway; IMP from 5-formamido-1-(5-phospho-D-ribosyl)imidazole-4-carboxamide: step 1/1. Functionally, catalyzes the cyclization of 5-formylamidoimidazole-4-carboxamide ribonucleotide to IMP. This is IMP cyclohydrolase from Methanothrix thermoacetophila (strain DSM 6194 / JCM 14653 / NBRC 101360 / PT) (Methanosaeta thermophila).